A 375-amino-acid chain; its full sequence is tRNA-specific 2-thiouridylase MnmA (375 aa).

Residues 12 to 19 and Met38 contribute to the ATP site; that span reads GMSGGVDS. The interaction with target base in tRNA stretch occupies residues 98–100; that stretch reads NPD. Cys103 functions as the Nucleophile in the catalytic mechanism. A disulfide bond links Cys103 and Cys200. ATP is bound at residue Gly127. The segment at 150-152 is interaction with tRNA; that stretch reads KDQ. The active-site Cysteine persulfide intermediate is the Cys200. The segment at 312–313 is interaction with tRNA; that stretch reads RY.

This sequence belongs to the MnmA/TRMU family.

The protein localises to the cytoplasm. It carries out the reaction S-sulfanyl-L-cysteinyl-[protein] + uridine(34) in tRNA + AH2 + ATP = 2-thiouridine(34) in tRNA + L-cysteinyl-[protein] + A + AMP + diphosphate + H(+). Functionally, catalyzes the 2-thiolation of uridine at the wobble position (U34) of tRNA, leading to the formation of s(2)U34. This Ligilactobacillus salivarius (strain UCC118) (Lactobacillus salivarius) protein is tRNA-specific 2-thiouridylase MnmA.